Consider the following 355-residue polypeptide: 3-dehydroquinate synthase (355 aa).

Residues 98–102 (GVIGD), 122–123 (TT), Lys135, Lys144, and 162–165 (TLNT) each bind NAD(+). Residues Glu177, His240, and His257 each coordinate Zn(2+).

Belongs to the sugar phosphate cyclases superfamily. Dehydroquinate synthase family. Co(2+) serves as cofactor. The cofactor is Zn(2+). It depends on NAD(+) as a cofactor.

It localises to the cytoplasm. The catalysed reaction is 7-phospho-2-dehydro-3-deoxy-D-arabino-heptonate = 3-dehydroquinate + phosphate. It participates in metabolic intermediate biosynthesis; chorismate biosynthesis; chorismate from D-erythrose 4-phosphate and phosphoenolpyruvate: step 2/7. Catalyzes the conversion of 3-deoxy-D-arabino-heptulosonate 7-phosphate (DAHP) to dehydroquinate (DHQ). The chain is 3-dehydroquinate synthase from Dictyoglomus thermophilum (strain ATCC 35947 / DSM 3960 / H-6-12).